Here is a 417-residue protein sequence, read N- to C-terminus: NADH-quinone oxidoreductase subunit D (417 aa).

Belongs to the complex I 49 kDa subunit family. NDH-1 is composed of 14 different subunits. Subunits NuoB, C, D, E, F, and G constitute the peripheral sector of the complex.

Its subcellular location is the cell inner membrane. The enzyme catalyses a quinone + NADH + 5 H(+)(in) = a quinol + NAD(+) + 4 H(+)(out). In terms of biological role, NDH-1 shuttles electrons from NADH, via FMN and iron-sulfur (Fe-S) centers, to quinones in the respiratory chain. The immediate electron acceptor for the enzyme in this species is believed to be ubiquinone. Couples the redox reaction to proton translocation (for every two electrons transferred, four hydrogen ions are translocated across the cytoplasmic membrane), and thus conserves the redox energy in a proton gradient. This chain is NADH-quinone oxidoreductase subunit D, found in Acidithiobacillus ferrooxidans (strain ATCC 53993 / BNL-5-31) (Leptospirillum ferrooxidans (ATCC 53993)).